The sequence spans 360 residues: Aminomethyltransferase (360 aa).

It belongs to the GcvT family. The glycine cleavage system is composed of four proteins: P, T, L and H.

It catalyses the reaction N(6)-[(R)-S(8)-aminomethyldihydrolipoyl]-L-lysyl-[protein] + (6S)-5,6,7,8-tetrahydrofolate = N(6)-[(R)-dihydrolipoyl]-L-lysyl-[protein] + (6R)-5,10-methylene-5,6,7,8-tetrahydrofolate + NH4(+). The glycine cleavage system catalyzes the degradation of glycine. In Methylococcus capsulatus (strain ATCC 33009 / NCIMB 11132 / Bath), this protein is Aminomethyltransferase.